A 406-amino-acid chain; its full sequence is NAD(P)H-quinone oxidoreductase subunit H, organellar chromatophore (406 aa).

This sequence belongs to the complex I 49 kDa subunit family. In terms of assembly, NDH is composed of at least 16 different subunits, 5 of which are encoded in the nucleus.

The protein resides in the plastid. Its subcellular location is the organellar chromatophore thylakoid membrane. The catalysed reaction is a quinone + NADH + H(+) = a quinol + NAD(+). Its function is as follows. NDH shuttles electrons from NAD(P)H:plastoquinone, via FMN and iron-sulfur (Fe-S) centers, to quinones in the photosynthetic chain and possibly in a chloroplast respiratory chain. The immediate electron acceptor for the enzyme in this species is believed to be plastoquinone. Couples the redox reaction to proton translocation, and thus conserves the redox energy in a proton gradient. The chain is NAD(P)H-quinone oxidoreductase subunit H, organellar chromatophore from Paulinella chromatophora.